The chain runs to 174 residues: NADH-quinone oxidoreductase subunit C (174 aa).

It belongs to the complex I 30 kDa subunit family. As to quaternary structure, NDH-1 is composed of 14 different subunits. Subunits NuoB, C, D, E, F, and G constitute the peripheral sector of the complex.

The protein resides in the cell membrane. It carries out the reaction a quinone + NADH + 5 H(+)(in) = a quinol + NAD(+) + 4 H(+)(out). Functionally, NDH-1 shuttles electrons from NADH, via FMN and iron-sulfur (Fe-S) centers, to quinones in the respiratory chain. The immediate electron acceptor for the enzyme in this species is believed to be ubiquinone. Couples the redox reaction to proton translocation (for every two electrons transferred, four hydrogen ions are translocated across the cytoplasmic membrane), and thus conserves the redox energy in a proton gradient. This chain is NADH-quinone oxidoreductase subunit C, found in Roseiflexus sp. (strain RS-1).